The sequence spans 749 residues: Homeobox-leucine zipper protein ROC7 (749 aa).

Residues 26 to 98 are disordered; that stretch reads LDQHQQHQHQ…KKRYHRHTQH (73 aa). A compositionally biased stretch (basic and acidic residues) spans 46 to 57; that stretch reads SDGRAPRDELEM. The span at 68–78 shows a compositional bias: gly residues; the sequence is SGGGGGGGGSG. Positions 86 to 97 are enriched in basic residues; it reads RPRKKRYHRHTQ. The segment at residues 88 to 147 is a DNA-binding region (homeobox); sequence RKKRYHRHTQHQIQELEAFFKECPHPDDKQRKELSRELGLEPLQVKFWFQNKRTQMKTQH. Residues 137 to 218 are a coiled coil; the sequence is QNKRTQMKTQ…DRISAIAAKY (82 aa). The START domain occupies 256 to 494; the sequence is ADFDKPLVIE…LERQCERLAS (239 aa).

This sequence belongs to the HD-ZIP homeobox family. Class IV subfamily.

The protein localises to the nucleus. Probable transcription factor. This is Homeobox-leucine zipper protein ROC7 (ROC7) from Oryza sativa subsp. indica (Rice).